The chain runs to 293 residues: Protein translocase subunit SecF (293 aa).

6 helical membrane-spanning segments follow: residues 10–30 (ARIF…SMFA), 130–150 (VKSA…YITI), 158–178 (LAAI…FSVL), 185–205 (SFVA…IVVF), 244–264 (LFAV…FSFA), and 267–287 (VGFC…WLFF).

The protein belongs to the SecD/SecF family. SecF subfamily. In terms of assembly, forms a complex with SecD. Part of the essential Sec protein translocation apparatus which comprises SecA, SecYEG and auxiliary proteins SecDF. Other proteins may also be involved.

Its subcellular location is the cell membrane. Part of the Sec protein translocase complex. Interacts with the SecYEG preprotein conducting channel. SecDF uses the proton motive force (PMF) to complete protein translocation after the ATP-dependent function of SecA. In Acidaminococcus fermentans (strain ATCC 25085 / DSM 20731 / CCUG 9996 / CIP 106432 / VR4), this protein is Protein translocase subunit SecF.